The sequence spans 227 residues: Cytochrome c oxidase subunit 2 (227 aa).

Residues 1–14 (MAYPFQLGLQDATS) are Mitochondrial intermembrane-facing. Residues 15 to 45 (PIMEELTNFHDHTLMIVFLISSLVLYIISLM) traverse the membrane as a helical segment. At 46–59 (LTTKLTHTSTMDAQ) the chain is on the mitochondrial matrix side. The chain crosses the membrane as a helical span at residues 60–87 (EVETIWTILPAVILILIALPSLRILYMM). At 88 to 227 (DEINNPVLTV…HFENWSTSMI (140 aa)) the chain is on the mitochondrial intermembrane side. Cu cation-binding residues include His161, Cys196, Glu198, Cys200, His204, and Met207. Glu198 provides a ligand contact to Mg(2+).

The protein belongs to the cytochrome c oxidase subunit 2 family. In terms of assembly, component of the cytochrome c oxidase (complex IV, CIV), a multisubunit enzyme composed of 14 subunits. The complex is composed of a catalytic core of 3 subunits MT-CO1, MT-CO2 and MT-CO3, encoded in the mitochondrial DNA, and 11 supernumerary subunits COX4I, COX5A, COX5B, COX6A, COX6B, COX6C, COX7A, COX7B, COX7C, COX8 and NDUFA4, which are encoded in the nuclear genome. The complex exists as a monomer or a dimer and forms supercomplexes (SCs) in the inner mitochondrial membrane with NADH-ubiquinone oxidoreductase (complex I, CI) and ubiquinol-cytochrome c oxidoreductase (cytochrome b-c1 complex, complex III, CIII), resulting in different assemblies (supercomplex SCI(1)III(2)IV(1) and megacomplex MCI(2)III(2)IV(2)). Found in a complex with TMEM177, COA6, COX18, COX20, SCO1 and SCO2. Interacts with TMEM177 in a COX20-dependent manner. Interacts with COX20. Interacts with COX16. Cu cation serves as cofactor.

Its subcellular location is the mitochondrion inner membrane. It carries out the reaction 4 Fe(II)-[cytochrome c] + O2 + 8 H(+)(in) = 4 Fe(III)-[cytochrome c] + 2 H2O + 4 H(+)(out). Functionally, component of the cytochrome c oxidase, the last enzyme in the mitochondrial electron transport chain which drives oxidative phosphorylation. The respiratory chain contains 3 multisubunit complexes succinate dehydrogenase (complex II, CII), ubiquinol-cytochrome c oxidoreductase (cytochrome b-c1 complex, complex III, CIII) and cytochrome c oxidase (complex IV, CIV), that cooperate to transfer electrons derived from NADH and succinate to molecular oxygen, creating an electrochemical gradient over the inner membrane that drives transmembrane transport and the ATP synthase. Cytochrome c oxidase is the component of the respiratory chain that catalyzes the reduction of oxygen to water. Electrons originating from reduced cytochrome c in the intermembrane space (IMS) are transferred via the dinuclear copper A center (CU(A)) of subunit 2 and heme A of subunit 1 to the active site in subunit 1, a binuclear center (BNC) formed by heme A3 and copper B (CU(B)). The BNC reduces molecular oxygen to 2 water molecules using 4 electrons from cytochrome c in the IMS and 4 protons from the mitochondrial matrix. The polypeptide is Cytochrome c oxidase subunit 2 (MT-CO2) (Praomys taitae (Taita hill rat)).